We begin with the raw amino-acid sequence, 626 residues long: UvrABC system protein C (626 aa).

The region spanning 26 to 105 is the GIY-YIG domain; it reads PEPGVYFMRD…IKQHQPHFNV (80 aa). One can recognise a UVR domain in the interval 215–250; sequence SELINTLSLQMEQAAEDLNFEQAARLRDQIKGLQGL.

Belongs to the UvrC family. In terms of assembly, interacts with UvrB in an incision complex.

The protein resides in the cytoplasm. Functionally, the UvrABC repair system catalyzes the recognition and processing of DNA lesions. UvrC both incises the 5' and 3' sides of the lesion. The N-terminal half is responsible for the 3' incision and the C-terminal half is responsible for the 5' incision. This chain is UvrABC system protein C, found in Acaryochloris marina (strain MBIC 11017).